The sequence spans 63 residues: Large ribosomal subunit protein bL32 (63 aa).

Residues 1–23 (MATPKAKVSKSRRDKRRAQFTAR) form a disordered region. Positions 7-18 (KVSKSRRDKRRA) are enriched in basic residues.

The protein belongs to the bacterial ribosomal protein bL32 family.

This is Large ribosomal subunit protein bL32 from Chlorobium phaeobacteroides (strain BS1).